Reading from the N-terminus, the 152-residue chain is UPF0225 protein Ent638_2310 (152 aa).

The protein belongs to the UPF0225 family.

This is UPF0225 protein Ent638_2310 from Enterobacter sp. (strain 638).